We begin with the raw amino-acid sequence, 281 residues long: Sulfur carrier protein FdhD (281 aa).

The Cysteine persulfide intermediate role is filled by cysteine 117.

This sequence belongs to the FdhD family.

The protein resides in the cytoplasm. Its function is as follows. Required for formate dehydrogenase (FDH) activity. Acts as a sulfur carrier protein that transfers sulfur from IscS to the molybdenum cofactor prior to its insertion into FDH. This chain is Sulfur carrier protein FdhD, found in Xanthomonas euvesicatoria pv. vesicatoria (strain 85-10) (Xanthomonas campestris pv. vesicatoria).